A 127-amino-acid chain; its full sequence is Protein ApaG (127 aa).

The 125-residue stretch at 3-127 (EGKKYQINIS…FTLAMPRVLH (125 aa)) folds into the ApaG domain.

This is Protein ApaG from Thiobacillus denitrificans (strain ATCC 25259 / T1).